The sequence spans 305 residues: Tyrosine recombinase XerD (305 aa).

Positions 3-88 (PADASVIERF…TLRAFYGLCL (86 aa)) constitute a Core-binding (CB) domain. Positions 109–299 (SLPKALTESQ…ARQHLQKLHA (191 aa)) constitute a Tyr recombinase domain. Catalysis depends on residues arginine 149, lysine 173, histidine 251, arginine 254, and histidine 277. The O-(3'-phospho-DNA)-tyrosine intermediate role is filled by tyrosine 286.

The protein belongs to the 'phage' integrase family. XerD subfamily. As to quaternary structure, forms a cyclic heterotetrameric complex composed of two molecules of XerC and two molecules of XerD.

It is found in the cytoplasm. In terms of biological role, site-specific tyrosine recombinase, which acts by catalyzing the cutting and rejoining of the recombining DNA molecules. The XerC-XerD complex is essential to convert dimers of the bacterial chromosome into monomers to permit their segregation at cell division. It also contributes to the segregational stability of plasmids. In Xanthomonas axonopodis pv. citri (strain 306), this protein is Tyrosine recombinase XerD.